The following is a 500-amino-acid chain: Glutamate--tRNA ligase (500 aa).

The 'HIGH' region motif lies at proline 12 to asparagine 22. The 'KMSKS' region signature appears at lysine 259–arginine 263. Residue lysine 262 coordinates ATP.

Belongs to the class-I aminoacyl-tRNA synthetase family. Glutamate--tRNA ligase type 1 subfamily. In terms of assembly, monomer.

Its subcellular location is the cytoplasm. The enzyme catalyses tRNA(Glu) + L-glutamate + ATP = L-glutamyl-tRNA(Glu) + AMP + diphosphate. Its function is as follows. Catalyzes the attachment of glutamate to tRNA(Glu) in a two-step reaction: glutamate is first activated by ATP to form Glu-AMP and then transferred to the acceptor end of tRNA(Glu). The sequence is that of Glutamate--tRNA ligase from Lactobacillus delbrueckii subsp. bulgaricus (strain ATCC 11842 / DSM 20081 / BCRC 10696 / JCM 1002 / NBRC 13953 / NCIMB 11778 / NCTC 12712 / WDCM 00102 / Lb 14).